The following is a 222-amino-acid chain: MEQKRYALIVAGGHGLRMGADRPKQFLLLAGLPVLMHTLNRFAPHVDAIVLVLPTDHHAYWQELCRKYDFSVSHRVVAGGNTRFASVRNGLQVVPDGVLVAVHDGVRPLVSAETIDACFDLAELKGAVAPCRPMTESLRYYATDGNYAVDRSRYVTVQTPQTFRSEWLREAYRQPYEEYFTDDCSVYEHHFGRPVALIVGNIENIKLTTPLDLSLAKLLLTS.

It belongs to the IspD/TarI cytidylyltransferase family. IspD subfamily.

It carries out the reaction 2-C-methyl-D-erythritol 4-phosphate + CTP + H(+) = 4-CDP-2-C-methyl-D-erythritol + diphosphate. Its pathway is isoprenoid biosynthesis; isopentenyl diphosphate biosynthesis via DXP pathway; isopentenyl diphosphate from 1-deoxy-D-xylulose 5-phosphate: step 2/6. Catalyzes the formation of 4-diphosphocytidyl-2-C-methyl-D-erythritol from CTP and 2-C-methyl-D-erythritol 4-phosphate (MEP). This chain is 2-C-methyl-D-erythritol 4-phosphate cytidylyltransferase, found in Porphyromonas gingivalis (strain ATCC BAA-308 / W83).